We begin with the raw amino-acid sequence, 485 residues long: Glutamate--tRNA ligase (485 aa).

The 'HIGH' region motif lies at Pro11 to Asn21. A 'KMSKS' region motif is present at residues Lys252 to Arg256. Lys255 contributes to the ATP binding site.

This sequence belongs to the class-I aminoacyl-tRNA synthetase family. Glutamate--tRNA ligase type 1 subfamily. As to quaternary structure, monomer.

It is found in the cytoplasm. The enzyme catalyses tRNA(Glu) + L-glutamate + ATP = L-glutamyl-tRNA(Glu) + AMP + diphosphate. Functionally, catalyzes the attachment of glutamate to tRNA(Glu) in a two-step reaction: glutamate is first activated by ATP to form Glu-AMP and then transferred to the acceptor end of tRNA(Glu). This chain is Glutamate--tRNA ligase, found in Bacillus cereus (strain ATCC 14579 / DSM 31 / CCUG 7414 / JCM 2152 / NBRC 15305 / NCIMB 9373 / NCTC 2599 / NRRL B-3711).